The chain runs to 237 residues: Phosphoribosylaminoimidazole-succinocarboxamide synthase (237 aa).

Belongs to the SAICAR synthetase family.

It catalyses the reaction 5-amino-1-(5-phospho-D-ribosyl)imidazole-4-carboxylate + L-aspartate + ATP = (2S)-2-[5-amino-1-(5-phospho-beta-D-ribosyl)imidazole-4-carboxamido]succinate + ADP + phosphate + 2 H(+). The protein operates within purine metabolism; IMP biosynthesis via de novo pathway; 5-amino-1-(5-phospho-D-ribosyl)imidazole-4-carboxamide from 5-amino-1-(5-phospho-D-ribosyl)imidazole-4-carboxylate: step 1/2. The chain is Phosphoribosylaminoimidazole-succinocarboxamide synthase from Methanosarcina mazei (strain ATCC BAA-159 / DSM 3647 / Goe1 / Go1 / JCM 11833 / OCM 88) (Methanosarcina frisia).